Consider the following 398-residue polypeptide: Membrane-spanning 4-domains subfamily A member 18 (398 aa).

The next 4 membrane-spanning stretches (helical) occupy residues 156-176, 178-198, 218-238, and 251-271; these read LGAIQILIGLTHIFSAINPVL, YYPFVTWLSGYPLWGGLSYIV, SISFNIISALFAFAGIFIIIT, and AVSGGLLPFALLEFILTCVVS. The disordered stretch occupies residues 316-346; that stretch reads TGPVSATNGPVNTTIHPVNTTTSPVNTTTSP. Residues 319-331 show a composition bias toward polar residues; that stretch reads VSATNGPVNTTIH. Positions 332 to 346 are enriched in low complexity; that stretch reads PVNTTTSPVNTTTSP.

The protein belongs to the MS4A family.

It localises to the membrane. This Homo sapiens (Human) protein is Membrane-spanning 4-domains subfamily A member 18 (MS4A18).